Consider the following 266-residue polypeptide: MSSSTYRKLPKILAAGLAIGCAGGYYAYKNSNKPPGLNPEIYAPFTVNKITELTSDASLFSLVPQSPSEHLTTLEPIAKVTIRDPSMQVQRPYTPLYLDANELKFFIRKYEEGPVSSYIHSKKEGDTIELRGPFKTTKLDCTKYPRIVAIVAGTGIAPIYQLAQSVKSPVDIVYCSRPGQPPLLKEELEKECPNVRVKSVQNRLVNIHDILDWDNVTVPLKDTLCIVCGSQKFVSTIAGPKADYGARQGEVKGLLSNNPFGKVWKL.

The chain crosses the membrane as a helical span at residues isoleucine 12 to tyrosine 28. The 101-residue stretch at glutamate 40–aspartate 140 folds into the FAD-binding FR-type domain.

It belongs to the flavoprotein pyridine nucleotide cytochrome reductase family. Requires FAD as cofactor.

It localises to the mitochondrion outer membrane. This is an uncharacterized protein from Schizosaccharomyces pombe (strain 972 / ATCC 24843) (Fission yeast).